A 117-amino-acid chain; its full sequence is Small nuclear ribonucleoprotein Sm D1 (117 aa).

Positions 2–74 (KLVRFLMKLT…IRYYILPDSL (73 aa)) constitute a Sm domain. The interval 81-117 (IDDSTKPKQKKKEVVRGRGRGRGRGTRGRGRGASRGF) is disordered. Residues 87–117 (PKQKKKEVVRGRGRGRGRGTRGRGRGASRGF) show a composition bias toward basic residues.

The protein belongs to the snRNP core protein family. Belongs to the 40S cdc5-associated complex (or cwf complex), a spliceosome sub-complex reminiscent of a late-stage spliceosome composed of the U2, U5 and U6 snRNAs and at least brr2, cdc5, cwf2/prp3, cwf3/syf1, cwf4/syf3, cwf5/ecm2, spp42/cwf6, cwf7/spf27, cwf8, cwf9, cwf10, cwf11, cwf12, prp45/cwf13, cwf14, cwf15, cwf16, cwf17, cwf18, cwf19, cwf20, cwf21, cwf22, cwf23, cwf24, cwf25, cwf26, cyp7/cwf27, cwf28, cwf29/ist3, lea1, msl1, prp5/cwf1, prp10, prp12/sap130, prp17, prp22, sap61, sap62, sap114, sap145, slu7, smb1, smd1, smd3, smf1, smg1 and syf2. Interacts with saf5; the interaction is direct.

It localises to the nucleus. The protein localises to the cytoplasm. In terms of biological role, plays a role in pre-mRNA splicing as a core component of the spliceosomal U1, U2, U4 and U5 small nuclear ribonucleoproteins (snRNPs), the building blocks of the spliceosome. This is Small nuclear ribonucleoprotein Sm D1 (smd1) from Schizosaccharomyces pombe (strain 972 / ATCC 24843) (Fission yeast).